Here is a 116-residue protein sequence, read N- to C-terminus: MGWKMASPTDGTDLEASLLSFEKLDRASPDLWPEQLPGVAEFAASFKSPITSSPPKWMAEIERDDIDMLKELGSLTTANLMEKVRGLQNLAYQLGLDESREMTRGKFLNILEKPKK.

Phosphoserine occurs at positions 28 and 53.

This sequence belongs to the lin-52 family. As to quaternary structure, component of the DREAM complex (also named LINC complex) at least composed of E2F4, E2F5, LIN9, LIN37, LIN52, LIN54, MYBL1, MYBL2, RBL1, RBL2, RBBP4, TFDP1 and TFDP2. The complex exists in quiescent cells where it represses cell cycle-dependent genes. It dissociates in S phase when LIN9, LIN37, LIN52 and LIN54 form a subcomplex that binds to MYBL2.

This is Protein lin-52 homolog (LIN52) from Homo sapiens (Human).